A 1102-amino-acid polypeptide reads, in one-letter code: Avirulence protein AvrXa10 (1102 aa).

Disordered stretches follow at residues 1 to 68 (MDPI…SAGS) and 127 to 151 (ARPP…PAAQ). A compositionally biased stretch (basic residues) spans 130–140 (PRAKPAPRRRA). A compositionally biased stretch (low complexity) spans 141–151 (AQPSDASPAAQ). 15 Core repeat repeats span residues 288–321 (LTPD…QAHG), 322–355 (LTPD…QAHG), 356–389 (LTPD…QDHG), 390–423 (LTPD…QDHG), 424–457 (LTPD…QDHG), 458–491 (LTPD…QDHG), 492–525 (LTPD…QTHG), 526–559 (LTPD…QDHG), 560–593 (LTPD…QAHG), 594–627 (LTPD…QDHG), 628–661 (LTPD…QDHG), 662–695 (LTPA…QDHG), 696–729 (LTPV…QDHG), 730–763 (LTPV…QDHG), and 764–797 (LTPV…QDHG). One copy of the Core repeat 15.5 repeat lies at 798–809 (LTPDQVVAIASN). The short motif at 951 to 954 (KRVK) is the Nuclear localization sequence A (NLSA) element. The span at 978–990 (DLDAPSPMHEGDQ) shows a compositional bias: basic and acidic residues. A disordered region spans residues 978–1021 (DLDAPSPMHEGDQTRASSRKRSRSDRAVTGPSTQQSFEVRVPEQ). A Nuclear localization sequence B (NLSB) motif is present at residues 997–1000 (KRSR). Residues 1034 to 1037 (KRPR) carry the Nuclear localization sequence C (NLSC) motif. Residues 1063–1093 (WEQDAAPFAGAADDFPAFNEEELAWLMELLP) are activation domain.

This sequence belongs to the transcription activator-like effector (TALE) family.

It localises to the secreted. The protein resides in the host nucleus. Functionally, avirulence protein. Induces the hypersensitive response (HR)in rice plants carrying the resistance gene Xa10. Activity depends on the presence of the core repeat domains; replacement with repeat domains from other proteins (AvrBs3 of X.euvesicatoria (AC P14727) or AvrXa7 of this organism) does not elicit the HR. Probably acts as a transcription factor in its host plant (rice) to induce plant resistance or disease. The protein is Avirulence protein AvrXa10 of Xanthomonas oryzae pv. oryzae.